A 49-amino-acid polypeptide reads, in one-letter code: Large ribosomal subunit protein bL33 (49 aa).

The protein belongs to the bacterial ribosomal protein bL33 family.

The sequence is that of Large ribosomal subunit protein bL33 from Desulforamulus reducens (strain ATCC BAA-1160 / DSM 100696 / MI-1) (Desulfotomaculum reducens).